The following is a 187-amino-acid chain: uncharacterized protein (187 aa).

Positions 26–157 (NRHAAVLLPI…YLDVSRRGQQ (132 aa)) constitute a Nudix hydrolase domain. Residues 64 to 86 (GVADPKDKSIIATALREAEEEVN) carry the Nudix box motif. Mg(2+)-binding residues include E80 and E84.

This sequence belongs to the Nudix hydrolase family. PCD1 subfamily. Mn(2+) serves as cofactor. It depends on Mg(2+) as a cofactor.

Functionally, probably mediates the hydrolysis of some nucleoside diphosphate derivatives. This is an uncharacterized protein from Photorhabdus laumondii subsp. laumondii (strain DSM 15139 / CIP 105565 / TT01) (Photorhabdus luminescens subsp. laumondii).